The following is a 552-amino-acid chain: MTKYVFVTGGVVSSLGKGIAAASLAAILESRGLKVTLLKLDPYINVDPGTMSPFQHGEVFVTEDGAETDLDLGHYERFISTKMRKANNFTTGQIYESVIRKERRGDYLGKTVQVIPHITNEIQAFIERGAASATCGEPDVAIVEIGGTVGDIESLPFLEAARQMSLRLGRNSACFVHLTLVPYVATAGELKTKPTQHSVQKLREIGILPHVLLCRADRRIPDDESKKISMFSNVPEDAVISVWDADSIYKIPQMLHDQGLDRIICDELKLSPKEADLSMWSELVEKLEHPKHEVTIGMVGKYVDLTESYKSLIEALRHASLHTSTKVNIEYIDSEEIESNGVDSLKHLDAVLVPGGFGRRGTEGKIAAIRYAREAKVPYLGICLGMQLAVIEFARDVVGLKQANSTEFDPDTPERVVALITEWYDREGKVETRTESSDLGGTMRLGSQRCPIKPGTMAEEIYGKDVNERHRHRYEVNNRFVPQLEAGGLIISARTPSEDLPEMMELPRSMHPWFVGVQFHPEFTSTPRDGHPLFKSFVEAALANKQARGAEA.

Residues Met1–Leu270 form an amidoligase domain region. Ser13 is a CTP binding site. Ser13 contributes to the UTP binding site. ATP contacts are provided by residues Ser14 to Ile19 and Asp71. The Mg(2+) site is built by Asp71 and Glu144. Residues Asp151–Glu153, Lys191–Gln196, and Lys227 each bind CTP. UTP contacts are provided by residues Lys191 to Gln196 and Lys227. Residues Thr295–Ala547 enclose the Glutamine amidotransferase type-1 domain. Residue Gly356 participates in L-glutamine binding. Cys383 (nucleophile; for glutamine hydrolysis) is an active-site residue. L-glutamine-binding positions include Leu384–Gln387, Glu407, and Arg473. Residues His520 and Glu522 contribute to the active site.

The protein belongs to the CTP synthase family. In terms of assembly, homotetramer.

The catalysed reaction is UTP + L-glutamine + ATP + H2O = CTP + L-glutamate + ADP + phosphate + 2 H(+). The enzyme catalyses L-glutamine + H2O = L-glutamate + NH4(+). It carries out the reaction UTP + NH4(+) + ATP = CTP + ADP + phosphate + 2 H(+). Its pathway is pyrimidine metabolism; CTP biosynthesis via de novo pathway; CTP from UDP: step 2/2. With respect to regulation, allosterically activated by GTP, when glutamine is the substrate; GTP has no effect on the reaction when ammonia is the substrate. The allosteric effector GTP functions by stabilizing the protein conformation that binds the tetrahedral intermediate(s) formed during glutamine hydrolysis. Inhibited by the product CTP, via allosteric rather than competitive inhibition. Catalyzes the ATP-dependent amination of UTP to CTP with either L-glutamine or ammonia as the source of nitrogen. Regulates intracellular CTP levels through interactions with the four ribonucleotide triphosphates. This chain is CTP synthase, found in Burkholderia vietnamiensis (strain G4 / LMG 22486) (Burkholderia cepacia (strain R1808)).